The following is a 289-amino-acid chain: MVVVTGREPDSRRQDGAMSSSDAEDDFLEPATPTATQAGHALPLLPQEFPEVVPLNIGGAHFTTRLSTLRCYEDTMLAAMFSGRHYIPTDSEGRYFIDRDGTHFGDVLNFLRSGDLPPRERVRAVYKEAQYYAIGPLLEQLENMQPLKGEKVRQAFLGLMPYYKDHLERIVEIARLRAVQRKARFAKLKVCVFKEEMPITPYECPLLNSLRFERSESDGQLFEHHCEVDVSFGPWEAVADVYDLLHCLVTDLSAQGLTVDHQCIGVCDKHLVNHYYCKRPIYEFKITWW.

The disordered stretch occupies residues Met1–Ala35. The BTB domain maps to Glu51 to Gly149.

Interacts with CUL3.

The protein localises to the cell membrane. It is found in the cytoplasm. Its subcellular location is the cytosol. Functionally, may be involved in the control of excitability of cortical neurons. In Homo sapiens (Human), this protein is BTB/POZ domain-containing protein KCTD7 (KCTD7).